The following is a 59-amino-acid chain: Large ribosomal subunit protein uL30 (59 aa).

It belongs to the universal ribosomal protein uL30 family. As to quaternary structure, part of the 50S ribosomal subunit.

In Edwardsiella ictaluri (strain 93-146), this protein is Large ribosomal subunit protein uL30.